The primary structure comprises 149 residues: Small ribosomal subunit protein bS6 (149 aa).

A disordered region spans residues 93 to 149; the sequence is VGKHEEGPSAMMQKRDRDDRPRRDGDRPDRGGFGDRGPRPDRGDRDDRPRRPREDRA. Positions 94 to 149 are enriched in basic and acidic residues; that stretch reads GKHEEGPSAMMQKRDRDDRPRRDGDRPDRGGFGDRGPRPDRGDRDDRPRRPREDRA.

This sequence belongs to the bacterial ribosomal protein bS6 family.

Its function is as follows. Binds together with bS18 to 16S ribosomal RNA. The chain is Small ribosomal subunit protein bS6 from Rhizobium meliloti (strain 1021) (Ensifer meliloti).